A 104-amino-acid chain; its full sequence is Integration host factor subunit alpha (104 aa).

The segment at 51–70 is disordered; it reads GNFQLRDKPQRPGRNPKTGE.

This sequence belongs to the bacterial histone-like protein family. In terms of assembly, heterodimer of an alpha and a beta chain.

Its function is as follows. This protein is one of the two subunits of integration host factor, a specific DNA-binding protein that functions in genetic recombination as well as in transcriptional and translational control. This Ralstonia nicotianae (strain ATCC BAA-1114 / GMI1000) (Ralstonia solanacearum) protein is Integration host factor subunit alpha.